We begin with the raw amino-acid sequence, 1066 residues long: Isoleucine--tRNA ligase (1066 aa).

Residues 47 to 57 (PYTTGYIHLGT) carry the 'HIGH' region motif. The 'KMSKS' region signature appears at 594–598 (KMSKS). Lys-597 is an ATP binding site.

It belongs to the class-I aminoacyl-tRNA synthetase family. IleS type 2 subfamily. In terms of assembly, monomer. Zn(2+) serves as cofactor.

The protein localises to the cytoplasm. The catalysed reaction is tRNA(Ile) + L-isoleucine + ATP = L-isoleucyl-tRNA(Ile) + AMP + diphosphate. Functionally, catalyzes the attachment of isoleucine to tRNA(Ile). As IleRS can inadvertently accommodate and process structurally similar amino acids such as valine, to avoid such errors it has two additional distinct tRNA(Ile)-dependent editing activities. One activity is designated as 'pretransfer' editing and involves the hydrolysis of activated Val-AMP. The other activity is designated 'posttransfer' editing and involves deacylation of mischarged Val-tRNA(Ile). This chain is Isoleucine--tRNA ligase, found in Methanocorpusculum labreanum (strain ATCC 43576 / DSM 4855 / Z).